Consider the following 507-residue polypeptide: Glycerol kinase 1 (507 aa).

Thr-12 serves as a coordination point for ADP. Positions 12, 13, and 14 each coordinate ATP. Thr-12 provides a ligand contact to sn-glycerol 3-phosphate. Arg-16 contributes to the ADP binding site. Residues Arg-82, Glu-83, Tyr-134, and Asp-249 each contribute to the sn-glycerol 3-phosphate site. Glycerol is bound by residues Arg-82, Glu-83, Tyr-134, Asp-249, and Gln-250. The ADP site is built by Thr-271 and Gly-315. The ATP site is built by Thr-271, Gly-315, Gln-319, and Gly-416. Residues Gly-416 and Asn-420 each coordinate ADP.

Belongs to the FGGY kinase family.

The catalysed reaction is glycerol + ATP = sn-glycerol 3-phosphate + ADP + H(+). It functions in the pathway polyol metabolism; glycerol degradation via glycerol kinase pathway; sn-glycerol 3-phosphate from glycerol: step 1/1. With respect to regulation, inhibited by fructose 1,6-bisphosphate (FBP). In terms of biological role, key enzyme in the regulation of glycerol uptake and metabolism. Catalyzes the phosphorylation of glycerol to yield sn-glycerol 3-phosphate. The chain is Glycerol kinase 1 from Streptomyces coelicolor (strain ATCC BAA-471 / A3(2) / M145).